A 1287-amino-acid chain; its full sequence is DENN domain-containing protein 5A (1287 aa).

The region spanning 57–259 (STTEGENFEQ…EVPLPPPGRS (203 aa)) is the uDENN domain. A Phosphoserine modification is found at serine 193. One can recognise a cDENN domain in the interval 278 to 414 (ELPLFDFPVK…LEFVQEVSEI (137 aa)). The region spanning 416–598 (MAFGVPPEGN…IMCHDDDDKD (183 aa)) is the dDENN domain. The RUN 1 domain maps to 787–950 (VEENTLIASL…DYFCFTNVFT (164 aa)). The region spanning 954 to 1062 (IPYHILIVPS…DDGSLERVLV (109 aa)) is the PLAT domain. At threonine 1079 the chain carries Phosphothreonine. 3 positions are modified to phosphoserine: serine 1085, serine 1087, and serine 1096. The RUN 2 domain maps to 1134 to 1280 (TLLLCGECGL…QEFNITLDTS (147 aa)).

It belongs to the RAB6IP1 family. Interacts with RAB6A bound to GTP.

The protein resides in the golgi apparatus membrane. In terms of biological role, guanine nucleotide exchange factor (GEF) which may activate RAB6A and RAB39A and/or RAB39B. Promotes the exchange of GDP to GTP, converting inactive GDP-bound Rab proteins into their active GTP-bound form. Involved in the negative regulation of neurite outgrowth. In Mus musculus (Mouse), this protein is DENN domain-containing protein 5A (Dennd5a).